Here is a 197-residue protein sequence, read N- to C-terminus: Probable GTP-binding protein EngB (197 aa).

An EngB-type G domain is found at 25 to 197 (SAPEIAFAGR…VRDEFFKFTR (173 aa)). GTP contacts are provided by residues 33–40 (GRSNVGKS), 60–64 (GCTRQ), 79–82 (DLPG), 146–149 (TKID), and 177–179 (MSI). Ser-40 and Thr-62 together coordinate Mg(2+).

Belongs to the TRAFAC class TrmE-Era-EngA-EngB-Septin-like GTPase superfamily. EngB GTPase family. It depends on Mg(2+) as a cofactor.

Its function is as follows. Necessary for normal cell division and for the maintenance of normal septation. The sequence is that of Probable GTP-binding protein EngB from Wolbachia sp. subsp. Drosophila simulans (strain wRi).